A 372-amino-acid chain; its full sequence is 3-galactosyl-N-acetylglucosaminide 4-alpha-L-fucosyltransferase FUT3 (372 aa).

The Cytoplasmic segment spans residues 1-15 (MDPLGAAKTQWPWRR). Residues 16–34 (CLAALLFQLLVAVCFFSYL) traverse the membrane as a helical; Signal-anchor for type II membrane protein segment. The Lumenal segment spans residues 35–372 (RVSRDDATGS…MVRSIAAWFT (338 aa)). Residues 40–68 (DATGSPRPGLMAVEPVTGAPGGSSRQDTT) are disordered. N-linked (GlcNAc...) asparagine glycans are attached at residues Asn165 and Asn196.

It belongs to the glycosyltransferase 10 family. Post-translationally, glycosylated.

Its subcellular location is the golgi apparatus. The protein resides in the golgi stack membrane. The catalysed reaction is a beta-D-galactosyl-(1-&gt;3)-N-acetyl-beta-D-glucosaminyl derivative + GDP-beta-L-fucose = a beta-D-galactosyl-(1-&gt;3)-[alpha-L-fucosyl-(1-&gt;4)]-N-acetyl-beta-D-glucosaminyl derivative + GDP + H(+). It carries out the reaction an N-acetyl-alpha-neuraminyl-(2-&gt;3)-beta-D-galactosyl-(1-&gt;4)-N-acetyl-beta-D-glucosaminyl derivative + GDP-beta-L-fucose = an alpha-Neu5Ac-(2-&gt;3)-beta-D-Gal-(1-&gt;4)-[alpha-L-Fuc-(1-&gt;3)]-beta-D-GlcNAc derivative + GDP + H(+). It catalyses the reaction a beta-D-galactosyl-(1-&gt;4)-N-acetyl-beta-D-glucosaminyl derivative + GDP-beta-L-fucose = a beta-D-galactosyl-(1-&gt;4)-[alpha-L-fucosyl-(1-&gt;3)]-N-acetyl-beta-D-glucosaminyl derivative + GDP + H(+). The enzyme catalyses an alpha-Neu5Ac-(2-&gt;3)-beta-D-Gal-(1-&gt;4)-beta-D-GlcNAc-(1-&gt;3)-beta-D-Gal-(1-&gt;4)-[alpha-L-Fuc-(1-&gt;3)]-beta-D-GlcNAc derivative + GDP-beta-L-fucose = an alpha-Neu5Ac-(2-&gt;3)-beta-D-Gal-(1-&gt;4)-[alpha-L-Fuc-(1-&gt;3)]-beta-D-GlcNAc-(1-&gt;3)-beta-D-Gal-(1-&gt;4)-[alpha-L-Fuc-(1-&gt;3)]-beta-D-GlcNAc derivative + GDP + H(+). The catalysed reaction is Lc4Cer + GDP-beta-L-fucose = a lactoside III(4)-a-Fuc-Lc4Cer + GDP + H(+). It carries out the reaction a beta-D-Gal-(1-&gt;3)-beta-D-GlcNAc-(1-&gt;3)-beta-D-Gal-(1-&gt;4)-beta-D-Glc-(1&lt;-&gt;1')-Cer(d18:1(4E)) + GDP-beta-L-fucose = a III(4)-a-Fuc-Lc4Cer(d18:1(4E)) + GDP + H(+). It catalyses the reaction N-acetyl-alpha-neuraminosyl-(2-&gt;3)-beta-D-galactosyl-(1-&gt;3)-[N-acetyl-alpha-neuraminosyl-(2-&gt;6)]-N-acetyl-beta-D-glucosaminyl-(1-&gt;3)-beta-D-galactosyl-(1-&gt;4)-beta-D-glucosyl-(1&lt;-&gt;1')-N-acyl-sphing-4-enine + GDP-beta-L-fucose = N-acetyl-alpha-neuraminosyl-(2-&gt;3)-beta-D-galactosyl-(1-&gt;3)-alpha-L-fucosyl-(1-&gt;4)-[N-acetyl-alpha-neuraminosyl-(2-&gt;6)-N-acetyl-beta-D-glucosaminyl-(1-&gt;3)]-beta-D-galactosyl-(1-&gt;4)-beta-D-glucosyl-(1&lt;-&gt;1')-N-acyl-sphing-4-enine + GDP + H(+). The enzyme catalyses N-acetyl-alpha-neuraminosyl-(2-&gt;3)-beta-D-galactosyl-(1-&gt;3)-N-acetyl-beta-D-glucosaminyl-(1-&gt;3)-beta-D-galactosyl-(1-&gt;4)-beta-D-glucosyl-(1&lt;-&gt;1')-N-acyl-sphing-4-enine + GDP-beta-L-fucose = N-acetyl-alpha-neuraminosyl-(2-&gt;3)-beta-D-galactosyl-(1-&gt;3)-alpha-L-fucosyl-(1-&gt;4)-[N-acetyl-beta-D-glucosaminyl-(1-&gt;3)]-beta-D-galactosyl-(1-&gt;4)-beta-D-glucosyl-(1&lt;-&gt;1')-N-acyl-sphing-4-enine + GDP + H(+). The catalysed reaction is beta-D-galactosyl-(1-&gt;3)-N-acetyl-D-glucosamine + GDP-beta-L-fucose = beta-D-galactosyl-(1-&gt;3)-[alpha-L-fucosyl-(1-&gt;4)]-N-acetyl-D-glucosamine + GDP + H(+). It carries out the reaction alpha-L-Fuc-(1-&gt;2)-beta-D-Gal-(1-&gt;3)-D-GlcNAc + GDP-beta-L-fucose = alpha-L-Fuc-(1-&gt;2)-beta-D-Gal-(1-&gt;3)-[alpha-L-Fuc-(1-&gt;4)]-D-GlcNAc + GDP + H(+). It catalyses the reaction alpha-L-Fuc-(1-&gt;2)-beta-D-Gal-(1-&gt;4)-D-GlcNAc + GDP-beta-L-fucose = alpha-L-Fuc-(1-&gt;2)-beta-D-Gal-(1-&gt;4)-[alpha-L-Fuc-(1-&gt;3)]-D-GlcNAc + GDP + H(+). The enzyme catalyses beta-D-galactosyl-(1-&gt;4)-N-acetyl-D-glucosamine + GDP-beta-L-fucose = beta-D-galactosyl-(1-&gt;4)-[alpha-L-fucosyl-(1-&gt;3)]-N-acetyl-D-glucosamine + GDP + H(+). The catalysed reaction is lactose + GDP-beta-L-fucose = beta-D-galactosyl-(1-&gt;4)-[alpha-L-fucosyl-(1-&gt;3)]-D-glucose + GDP + H(+). It carries out the reaction an alpha-Neu5Ac-(2-&gt;3)-beta-D-Gal-(1-&gt;3)-D-GlcNAc derivative + GDP-beta-L-fucose = an alpha-Neu5Ac-(2-&gt;3)-beta-D-Gal-(1-&gt;3)-[alpha-L-Fuc-(1-&gt;4)]-beta-D-GlcNAc derivative + GDP + H(+). It participates in protein modification; protein glycosylation. Its function is as follows. Catalyzes the transfer of L-fucose, from a guanosine diphosphate-beta-L-fucose, to both the subterminal N-acetyl glucosamine (GlcNAc) of type 1 chain (beta-D-Gal-(1-&gt;3)-beta-D-GlcNAc) glycolipids and oligosaccharides via an alpha(1,4) linkage, and the subterminal glucose (Glc) or GlcNAc of type 2 chain (beta-D-Gal-(1-&gt;4)-beta-D-GlcNAc) oligosaccharides via an alpha(1,3) linkage, independently of the presence of terminal alpha-L-fucosyl-(1,2) moieties on the terminal galactose of these acceptors and participates in the blood groups Lewis determination and expression of Lewis a (Le(a)), lewis b (Le(b)), Lewis x/SSEA-1 (Le(x)) and lewis y (Le(y)) antigens. Also catalyzes the transfer of L-fucose to subterminal GlcNAc of sialyl- and disialyl-lactotetraosylceramide to produce sialyl Lewis a (sLe(a)) and disialyl Lewis a via an alpha(1,4) linkage and therefore may regulate cell surface sialyl Lewis a expression and consequently regulates adhesive properties to E-selectin, cell proliferation and migration. Catalyzes the transfer of an L-fucose to 3'-sialyl-N-acetyllactosamine by an alpha(1,3) linkage, which allows the formation of sialyl-Lewis x structure and therefore may regulate the sialyl-Lewis x surface antigen expression and consequently adhesive properties to E-selectin. Prefers type 1 chain over type 2 acceptors. Type 1 tetrasaccharide is a better acceptor than type 1 disaccharide suggesting that a beta anomeric configuration of GlcNAc in the substrate is preferred. Lewis-positive (Le(+)) individuals have an active enzyme while Lewis-negative (Le(-)) individuals have an inactive enzyme. The protein is 3-galactosyl-N-acetylglucosaminide 4-alpha-L-fucosyltransferase FUT3 of Pongo pygmaeus (Bornean orangutan).